The primary structure comprises 100 residues: MDNLSNYLIVSAVLFSIGTIGVLTRKNAIVVFMCIELMLNAVNLTFVAFSRHLGNLDGQIFVFFIMTVAAAEAAVGLALFIAFFNNRESIDIDDANLMKW.

Transmembrane regions (helical) follow at residues 4 to 24, 29 to 49, and 60 to 80; these read LSNY…GVLT, IVVF…FVAF, and IFVF…LALF.

This sequence belongs to the complex I subunit 4L family. NDH-1 is composed of 14 different subunits. Subunits NuoA, H, J, K, L, M, N constitute the membrane sector of the complex.

It is found in the cell inner membrane. The catalysed reaction is a quinone + NADH + 5 H(+)(in) = a quinol + NAD(+) + 4 H(+)(out). Functionally, NDH-1 shuttles electrons from NADH, via FMN and iron-sulfur (Fe-S) centers, to quinones in the respiratory chain. The immediate electron acceptor for the enzyme in this species is believed to be ubiquinone. Couples the redox reaction to proton translocation (for every two electrons transferred, four hydrogen ions are translocated across the cytoplasmic membrane), and thus conserves the redox energy in a proton gradient. This chain is NADH-quinone oxidoreductase subunit K, found in Trichlorobacter lovleyi (strain ATCC BAA-1151 / DSM 17278 / SZ) (Geobacter lovleyi).